Here is a 670-residue protein sequence, read N- to C-terminus: DUF724 domain-containing protein 1 (670 aa).

2 disordered regions span residues 283–315 and 368–445; these read HNGP…PMTP and ANAE…NNDD. Polar residues-rich tracts occupy residues 294–309, 379–392, and 426–442; these read SPSN…SSSG, RNQN…TQQM, and CNGS…SICN. Residues 484–669 form the DUF724 domain; the sequence is PFAKKLPFWK…LEFQTTVSTP (186 aa).

As to expression, expressed in stems and flowers.

It localises to the nucleus. In terms of biological role, may be involved in the polar growth of plant cells via transportation of RNAs. This Arabidopsis thaliana (Mouse-ear cress) protein is DUF724 domain-containing protein 1.